The primary structure comprises 257 residues: 1-(5-phosphoribosyl)-5-[(5-phosphoribosylamino)methylideneamino] imidazole-4-carboxamide isomerase (257 aa).

Asp8 functions as the Proton acceptor in the catalytic mechanism. The active-site Proton donor is the Asp130.

It belongs to the HisA/HisF family.

The protein resides in the cytoplasm. It carries out the reaction 1-(5-phospho-beta-D-ribosyl)-5-[(5-phospho-beta-D-ribosylamino)methylideneamino]imidazole-4-carboxamide = 5-[(5-phospho-1-deoxy-D-ribulos-1-ylimino)methylamino]-1-(5-phospho-beta-D-ribosyl)imidazole-4-carboxamide. It functions in the pathway amino-acid biosynthesis; L-histidine biosynthesis; L-histidine from 5-phospho-alpha-D-ribose 1-diphosphate: step 4/9. This is 1-(5-phosphoribosyl)-5-[(5-phosphoribosylamino)methylideneamino] imidazole-4-carboxamide isomerase from Chlorobium chlorochromatii (strain CaD3).